Here is a 184-residue protein sequence, read N- to C-terminus: Oligoribonuclease (184 aa).

The 164-residue stretch at 7 to 170 (LIWIDLEMTG…DDIYESIEEL (164 aa)) folds into the Exonuclease domain. Tyr128 is an active-site residue.

This sequence belongs to the oligoribonuclease family.

It is found in the cytoplasm. 3'-to-5' exoribonuclease specific for small oligoribonucleotides. This is Oligoribonuclease from Hydrogenovibrio crunogenus (strain DSM 25203 / XCL-2) (Thiomicrospira crunogena).